Reading from the N-terminus, the 101-residue chain is DNA-binding protein Fis (101 aa).

Positions 77–96 (QTRAANMLGINRGTLRKKLK) form a DNA-binding region, H-T-H motif.

This sequence belongs to the transcriptional regulatory Fis family. Homodimer.

Functionally, activates ribosomal RNA transcription. Plays a direct role in upstream activation of rRNA promoters. The chain is DNA-binding protein Fis from Shewanella pealeana (strain ATCC 700345 / ANG-SQ1).